The sequence spans 249 residues: 3-deoxy-D-manno-octulosonic acid kinase (249 aa).

Asp175 is an active-site residue.

It belongs to the protein kinase superfamily. KdkA/RfaP family.

The protein resides in the cell inner membrane. It catalyses the reaction an alpha-Kdo-(2-&gt;6)-lipid IVA + ATP = a 4-O-phospho-alpha-Kdo-(2-&gt;6)-lipid IVA + ADP + H(+). Its pathway is bacterial outer membrane biogenesis; LPS core biosynthesis. Catalyzes the ATP-dependent phosphorylation of the 3-deoxy-D-manno-octulosonic acid (Kdo) residue in Kdo-lipid IV(A) at the 4-OH position. The protein is 3-deoxy-D-manno-octulosonic acid kinase of Xanthomonas axonopodis pv. citri (strain 306).